Here is a 185-residue protein sequence, read N- to C-terminus: Large ribosomal subunit protein uL5 (185 aa).

The protein belongs to the universal ribosomal protein uL5 family. As to quaternary structure, part of the 50S ribosomal subunit; part of the 5S rRNA/L5/L18/L25 subcomplex. Contacts the 5S rRNA and the P site tRNA. Forms a bridge to the 30S subunit in the 70S ribosome.

Its function is as follows. This is one of the proteins that bind and probably mediate the attachment of the 5S RNA into the large ribosomal subunit, where it forms part of the central protuberance. In the 70S ribosome it contacts protein S13 of the 30S subunit (bridge B1b), connecting the 2 subunits; this bridge is implicated in subunit movement. Contacts the P site tRNA; the 5S rRNA and some of its associated proteins might help stabilize positioning of ribosome-bound tRNAs. The protein is Large ribosomal subunit protein uL5 of Rhodopseudomonas palustris (strain HaA2).